The following is a 196-amino-acid chain: Large ribosomal subunit protein bL25 (196 aa).

The protein belongs to the bacterial ribosomal protein bL25 family. CTC subfamily. Part of the 50S ribosomal subunit; part of the 5S rRNA/L5/L18/L25 subcomplex. Contacts the 5S rRNA. Binds to the 5S rRNA independently of L5 and L18.

Functionally, this is one of the proteins that binds to the 5S RNA in the ribosome where it forms part of the central protuberance. This is Large ribosomal subunit protein bL25 from Bacteroides fragilis (strain ATCC 25285 / DSM 2151 / CCUG 4856 / JCM 11019 / LMG 10263 / NCTC 9343 / Onslow / VPI 2553 / EN-2).